A 716-amino-acid chain; its full sequence is Polyribonucleotide nucleotidyltransferase (716 aa).

Mg(2+)-binding residues include D488 and D494. In terms of domain architecture, KH spans 555–614 (PKIETITIPTDKIREVIGTGGKVIREIVATTGAKVDINDEGTVKVSASDGAKIKAAIDWI). Residues 624–692 (GAIYDGKVVK…DRGKTKLSMK (69 aa)) enclose the S1 motif domain. The interval 695 to 716 (DQETGEDLSKKEAVSPEEAVNT) is disordered.

The protein belongs to the polyribonucleotide nucleotidyltransferase family. The cofactor is Mg(2+).

The protein localises to the cytoplasm. The catalysed reaction is RNA(n+1) + phosphate = RNA(n) + a ribonucleoside 5'-diphosphate. In terms of biological role, involved in mRNA degradation. Catalyzes the phosphorolysis of single-stranded polyribonucleotides processively in the 3'- to 5'-direction. The sequence is that of Polyribonucleotide nucleotidyltransferase from Caulobacter sp. (strain K31).